We begin with the raw amino-acid sequence, 147 residues long: Ponticulin-like protein C4 (147 aa).

A signal peptide spans 1–20; sequence MKFTKSLLLLIVAVFASSNA. Residue N118 is the site of GPI-like-anchor amidated asparagine attachment. N-linked (GlcNAc...) asparagine glycosylation occurs at N118. Residues 119 to 147 constitute a propeptide, removed in mature form; that stretch reads SSESDSSDSTRIGASFALAAAALLSMIAL.

It belongs to the ponticulin family. In terms of processing, the GPI-like-anchor contains a phosphoceramide group, rather than a phosphatidyl group.

It is found in the cell membrane. This Dictyostelium discoideum (Social amoeba) protein is Ponticulin-like protein C4 (ponC4).